A 407-amino-acid polypeptide reads, in one-letter code: uncharacterized protein (407 aa).

Lysine 22 is covalently cross-linked (Glycyl lysine isopeptide (Lys-Gly) (interchain with G-Cter in ubiquitin)).

It belongs to the SVF1 family.

Its subcellular location is the cytoplasm. This is an uncharacterized protein from Saccharomyces cerevisiae (strain ATCC 204508 / S288c) (Baker's yeast).